We begin with the raw amino-acid sequence, 75 residues long: Molt-inhibiting hormone (75 aa).

Cystine bridges form between Cys7/Cys44, Cys24/Cys40, and Cys27/Cys53. Residue Ala75 is modified to Alanine amide.

This sequence belongs to the arthropod CHH/MIH/GIH/VIH hormone family.

Its subcellular location is the secreted. Inhibits Y-organs where molting hormone (ecdysteroid) is secreted. A molting cycle is initiated when MIH secretion diminishes or stops. The protein is Molt-inhibiting hormone of Procambarus clarkii (Red swamp crayfish).